Reading from the N-terminus, the 365-residue chain is UDP-N-acetylglucosamine--N-acetylmuramyl-(pentapeptide) pyrophosphoryl-undecaprenol N-acetylglucosamine transferase (365 aa).

UDP-N-acetyl-alpha-D-glucosamine-binding positions include 19-21 (TGG), Asn131, Arg170, Ser201, Ile255, 274-279 (ALTVTE), and Gln300.

This sequence belongs to the glycosyltransferase 28 family. MurG subfamily.

The protein resides in the cell inner membrane. It catalyses the reaction di-trans,octa-cis-undecaprenyl diphospho-N-acetyl-alpha-D-muramoyl-L-alanyl-D-glutamyl-meso-2,6-diaminopimeloyl-D-alanyl-D-alanine + UDP-N-acetyl-alpha-D-glucosamine = di-trans,octa-cis-undecaprenyl diphospho-[N-acetyl-alpha-D-glucosaminyl-(1-&gt;4)]-N-acetyl-alpha-D-muramoyl-L-alanyl-D-glutamyl-meso-2,6-diaminopimeloyl-D-alanyl-D-alanine + UDP + H(+). The protein operates within cell wall biogenesis; peptidoglycan biosynthesis. Cell wall formation. Catalyzes the transfer of a GlcNAc subunit on undecaprenyl-pyrophosphoryl-MurNAc-pentapeptide (lipid intermediate I) to form undecaprenyl-pyrophosphoryl-MurNAc-(pentapeptide)GlcNAc (lipid intermediate II). The protein is UDP-N-acetylglucosamine--N-acetylmuramyl-(pentapeptide) pyrophosphoryl-undecaprenol N-acetylglucosamine transferase of Acinetobacter baumannii (strain AB307-0294).